We begin with the raw amino-acid sequence, 192 residues long: Hydrogenase expression/formation protein HupD (192 aa).

Positions 23, 69, and 100 each coordinate Ni(2+).

The protein belongs to the peptidase A31 family.

Not known. Could be involved in the processing of hydrogenase. This is Hydrogenase expression/formation protein HupD (hupD) from Bradyrhizobium diazoefficiens (strain JCM 10833 / BCRC 13528 / IAM 13628 / NBRC 14792 / USDA 110).